Here is a 383-residue protein sequence, read N- to C-terminus: Homoserine O-succinyltransferase (383 aa).

Residues 51-361 form the AB hydrolase-1 domain; sequence NALLICHALS…ESDFGHDAFL (311 aa). Catalysis depends on serine 157, which acts as the Nucleophile. Residue arginine 227 coordinates substrate. Residues aspartate 324 and histidine 357 contribute to the active site. Aspartate 358 is a substrate binding site.

Belongs to the AB hydrolase superfamily. MetX family. In terms of assembly, homodimer.

Its subcellular location is the cytoplasm. It catalyses the reaction L-homoserine + succinyl-CoA = O-succinyl-L-homoserine + CoA. It participates in amino-acid biosynthesis; L-methionine biosynthesis via de novo pathway; O-succinyl-L-homoserine from L-homoserine: step 1/1. Its function is as follows. Transfers a succinyl group from succinyl-CoA to L-homoserine, forming succinyl-L-homoserine. In Teredinibacter turnerae (strain ATCC 39867 / T7901), this protein is Homoserine O-succinyltransferase.